A 444-amino-acid chain; its full sequence is MSQSYINVIGAGLAGSEAAYQIAERGIPVKLYEMRGVKSTPQHKTDNFAELVCSNSLRGDALTNAVGLLKEEMRRLGSVILESAEATRVPAGGALAVDRDGFSQMVTEKVVNHPLIEVVRDEITELPTDVITVVATGPLTSDALAEKIHALNDGDGFYFYDAAAPIIDVNTIDMSKVYLKSRYDKGEAAYLNAPMTKQEFMDFHEALVNAEEAPLNSFEKEKYFEGCMPIEVMAKRGIKTMLYGPMKPVGLEYPDDYTGPRDGEFKTPYAVVQLRQDNAAGSLYNIVGFQTHLKWGEQKRVFQMIPSLENAEFVRYGVMHRNSYMDSPNLLEQTYRSKKQPNLFFAGQMTGVEGYVESAASGLVAGINAARLFKEESEAIFPDTTAIGSLAHYITHADSKHFQPMNVNFGIIKELEGERIRDKKARYEKIAERALADLEEFLTV.

10–15 (GAGLAG) serves as a coordination point for FAD.

The protein belongs to the MnmG family. TrmFO subfamily. FAD is required as a cofactor.

Its subcellular location is the cytoplasm. The enzyme catalyses uridine(54) in tRNA + (6R)-5,10-methylene-5,6,7,8-tetrahydrofolate + NADH + H(+) = 5-methyluridine(54) in tRNA + (6S)-5,6,7,8-tetrahydrofolate + NAD(+). It catalyses the reaction uridine(54) in tRNA + (6R)-5,10-methylene-5,6,7,8-tetrahydrofolate + NADPH + H(+) = 5-methyluridine(54) in tRNA + (6S)-5,6,7,8-tetrahydrofolate + NADP(+). Functionally, catalyzes the folate-dependent formation of 5-methyl-uridine at position 54 (M-5-U54) in all tRNAs. This Streptococcus pneumoniae (strain Taiwan19F-14) protein is Methylenetetrahydrofolate--tRNA-(uracil-5-)-methyltransferase TrmFO.